A 294-amino-acid chain; its full sequence is 4-hydroxy-tetrahydrodipicolinate synthase (294 aa).

Pyruvate is bound at residue Thr-47. Tyr-135 acts as the Proton donor/acceptor in catalysis. Lys-163 acts as the Schiff-base intermediate with substrate in catalysis. Ile-205 is a binding site for pyruvate.

It belongs to the DapA family. As to quaternary structure, homotetramer; dimer of dimers.

Its subcellular location is the cytoplasm. It carries out the reaction L-aspartate 4-semialdehyde + pyruvate = (2S,4S)-4-hydroxy-2,3,4,5-tetrahydrodipicolinate + H2O + H(+). It participates in amino-acid biosynthesis; L-lysine biosynthesis via DAP pathway; (S)-tetrahydrodipicolinate from L-aspartate: step 3/4. Functionally, catalyzes the condensation of (S)-aspartate-beta-semialdehyde [(S)-ASA] and pyruvate to 4-hydroxy-tetrahydrodipicolinate (HTPA). This chain is 4-hydroxy-tetrahydrodipicolinate synthase, found in Rickettsia prowazekii (strain Madrid E).